We begin with the raw amino-acid sequence, 30 residues long: Cycloviolacin-O24 (30 aa).

A cross-link (cyclopeptide (Gly-Asn)) is located at residues 1-30 (GLPTCGETCFGGTCNTPGCTCDPWPVCTHN). Cystine bridges form between cysteine 5/cysteine 19, cysteine 9/cysteine 21, and cysteine 14/cysteine 27.

This is a cyclic peptide. In terms of tissue distribution, expressed in leaves but not in petals, petioles, roots and runners (at protein level).

Probably participates in a plant defense mechanism. Has hemolytic activity. This chain is Cycloviolacin-O24, found in Viola odorata (Sweet violet).